Here is a 114-residue protein sequence, read N- to C-terminus: Pole-localizer protein TmaR (114 aa).

A coiled-coil region spans residues 70 to 111 (RDDYESRVDDYTIRNAELSKQRREASTKMKEQKKAHAELLKN). The interval 89-114 (KQRREASTKMKEQKKAHAELLKNAEK) is disordered.

It belongs to the pole-localizer TmaR family.

Its subcellular location is the cytoplasm. In terms of biological role, pole-localizer protein involved in the regulation of several cellular processes. This is Pole-localizer protein TmaR from Haemophilus influenzae (strain PittEE).